We begin with the raw amino-acid sequence, 474 residues long: Glutathione synthetase (474 aa).

An N-acetylalanine modification is found at alanine 2. A substrate-binding site is contributed by arginine 125. Glutamate 144 provides a ligand contact to ATP. Mg(2+) contacts are provided by glutamate 144 and asparagine 146. Substrate is bound by residues 148 to 151 (VSAS), 214 to 216 (ERN), glutamine 220, and 267 to 270 (RDGY). Residues lysine 305, 364-373 (KPQREGGGNN), tyrosine 375, and 398-401 (MEKI) each bind ATP. Glutamate 368 contacts Mg(2+). Serine 415 is subject to Phosphoserine. Glutamate 425 is an ATP binding site. Residue arginine 450 participates in substrate binding. ATP contacts are provided by lysine 452 and aspartate 458. Position 461-462 (461-462 (VA)) interacts with substrate.

The protein belongs to the eukaryotic GSH synthase family. Homodimer. It depends on Mg(2+) as a cofactor.

It catalyses the reaction gamma-L-glutamyl-L-cysteine + glycine + ATP = glutathione + ADP + phosphate + H(+). The catalysed reaction is gamma-L-glutamyl-(2S)-2-aminobutanoate + glycine + ATP = ophthalmate + ADP + phosphate + H(+). The protein operates within sulfur metabolism; glutathione biosynthesis; glutathione from L-cysteine and L-glutamate: step 2/2. Catalyzes the production of glutathione from gamma-glutamylcysteine and glycine in an ATP-dependent manner. Glutathione (gamma-glutamylcysteinylglycine, GSH) is the most abundant intracellular thiol in living aerobic cells and is required for numerous processes including the protection of cells against oxidative damage, amino acid transport, the detoxification of foreign compounds, the maintenance of protein sulfhydryl groups in a reduced state and acts as a cofactor for a number of enzymes. Participates in ophthalmate biosynthesis in hepatocytes. The protein is Glutathione synthetase of Bos taurus (Bovine).